The following is a 530-amino-acid chain: Arginine--tRNA ligase (530 aa).

Residues 113-123 (ANPTGPLHIGH) carry the 'HIGH' region motif.

The protein belongs to the class-I aminoacyl-tRNA synthetase family. In terms of assembly, monomer.

The protein resides in the cytoplasm. The enzyme catalyses tRNA(Arg) + L-arginine + ATP = L-arginyl-tRNA(Arg) + AMP + diphosphate. This Campylobacter jejuni subsp. jejuni serotype O:23/36 (strain 81-176) protein is Arginine--tRNA ligase.